Here is a 461-residue protein sequence, read N- to C-terminus: Chromosomal replication initiator protein DnaA (461 aa).

Residues 1-90 are domain I, interacts with DnaA modulators; it reads MAVSLWQQCI…RPSARPVAPA (90 aa). Residues 91–124 form a domain II region; it reads PVAAKPVNRQTKAQVGTTSFNTQAEPIINPNHRS. A domain III, AAA+ region region spans residues 125–341; the sequence is NINPTYQFDN…GALNRVIANA (217 aa). Residues G169, G171, K172, and T173 each contribute to the ATP site. The domain IV, binds dsDNA stretch occupies residues 342–461; the sequence is NFTGRPITID…YANLIRTLSS (120 aa).

Belongs to the DnaA family. In terms of assembly, oligomerizes as a right-handed, spiral filament on DNA at oriC.

It is found in the cytoplasm. In terms of biological role, plays an essential role in the initiation and regulation of chromosomal replication. ATP-DnaA binds to the origin of replication (oriC) to initiate formation of the DNA replication initiation complex once per cell cycle. Binds the DnaA box (a 9 base pair repeat at the origin) and separates the double-stranded (ds)DNA. Forms a right-handed helical filament on oriC DNA; dsDNA binds to the exterior of the filament while single-stranded (ss)DNA is stabiized in the filament's interior. The ATP-DnaA-oriC complex binds and stabilizes one strand of the AT-rich DNA unwinding element (DUE), permitting loading of DNA polymerase. After initiation quickly degrades to an ADP-DnaA complex that is not apt for DNA replication. Binds acidic phospholipids. This chain is Chromosomal replication initiator protein DnaA, found in Shewanella frigidimarina (strain NCIMB 400).